Reading from the N-terminus, the 586-residue chain is NudC domain-containing protein 1 (586 aa).

One can recognise a CS domain in the interval 275-364 (KREPLYNWQQ…EPGCTWAELV (90 aa)).

The protein resides in the cytoplasm. It localises to the nucleus. The chain is NudC domain-containing protein 1 from Xenopus laevis (African clawed frog).